The chain runs to 159 residues: Large ribosomal subunit protein uL22 (159 aa).

The protein belongs to the universal ribosomal protein uL22 family. As to quaternary structure, part of the 50S ribosomal subunit.

Functionally, this protein binds specifically to 23S rRNA; its binding is stimulated by other ribosomal proteins, e.g. L4, L17, and L20. It is important during the early stages of 50S assembly. It makes multiple contacts with different domains of the 23S rRNA in the assembled 50S subunit and ribosome. The globular domain of the protein is located near the polypeptide exit tunnel on the outside of the subunit, while an extended beta-hairpin is found that lines the wall of the exit tunnel in the center of the 70S ribosome. The sequence is that of Large ribosomal subunit protein uL22 from Thermotoga sp. (strain RQ2).